We begin with the raw amino-acid sequence, 279 residues long: Dermonecrotic toxin StSicTox-betaIB1i (279 aa).

His12 is an active-site residue. Mg(2+)-binding residues include Glu32 and Asp34. His48 serves as the catalytic Nucleophile. Cystine bridges form between Cys52–Cys58 and Cys54–Cys198. Asp92 serves as a coordination point for Mg(2+).

The protein belongs to the arthropod phospholipase D family. Class II subfamily. Class IIb sub-subfamily. Mg(2+) serves as cofactor. In terms of tissue distribution, expressed by the venom gland.

It is found in the secreted. The enzyme catalyses an N-(acyl)-sphingosylphosphocholine = an N-(acyl)-sphingosyl-1,3-cyclic phosphate + choline. It carries out the reaction N-hexanoyl-sphing-4-enine-1-phosphocholine = N-(hexanoyl)-sphing-4-enine-1,3-cyclic phosphate + choline. It catalyses the reaction an N-(acyl)-sphingosylphosphoethanolamine = an N-(acyl)-sphingosyl-1,3-cyclic phosphate + ethanolamine. The catalysed reaction is N-dodecanoyl-heptadecasphing-4-enine-1-phosphoethanolamine = N-dodecanoyl-heptadecasphing-4-enine-1,3-cyclic phosphate + ethanolamine. The enzyme catalyses a 1-acyl-sn-glycero-3-phosphoethanolamine = a 1-acyl-sn-glycero-2,3-cyclic phosphate + ethanolamine. It carries out the reaction 1-tetradecanoyl-sn-glycero-3-phosphoethanolamine = 1-tetradecanoyl-sn-glycero-2,3-cyclic phosphate + ethanolamine. Functionally, dermonecrotic toxins cleave the phosphodiester linkage between the phosphate and headgroup of certain phospholipids (sphingolipid and lysolipid substrates), forming an alcohol (often choline) and a cyclic phosphate. This toxin acts on lysophosphatidylethanolamine (LPE) and ceramide phosphoethanolamine (CPE) with high activity. This toxin acts on sphingomyelin (SM) with very low activity and is not active on lysophosphatidylserine (LPS), lysophosphatidylcholine (LPC) and lysophosphatidylglycerol (LPG). It acts by transphosphatidylation, releasing exclusively cyclic phosphate as second products. It is not surprising that spider toxins have affinity for ethanolamine-containing sphingolipids since they are common in insect prey. Induces dermonecrosis, hemolysis, increased vascular permeability, edema, inflammatory response, and platelet aggregation. The chain is Dermonecrotic toxin StSicTox-betaIB1i from Sicarius terrosus (Cave spider).